Consider the following 631-residue polypeptide: 1-deoxy-D-xylulose-5-phosphate synthase (631 aa).

Thiamine diphosphate-binding positions include histidine 72 and 113-115; that span reads GHA. Residue aspartate 144 coordinates Mg(2+). Residues 145–146, asparagine 174, tyrosine 287, and glutamate 370 contribute to the thiamine diphosphate site; that span reads GA. Mg(2+) is bound at residue asparagine 174.

The protein belongs to the transketolase family. DXPS subfamily. Homodimer. Mg(2+) serves as cofactor. Thiamine diphosphate is required as a cofactor.

It catalyses the reaction D-glyceraldehyde 3-phosphate + pyruvate + H(+) = 1-deoxy-D-xylulose 5-phosphate + CO2. It participates in metabolic intermediate biosynthesis; 1-deoxy-D-xylulose 5-phosphate biosynthesis; 1-deoxy-D-xylulose 5-phosphate from D-glyceraldehyde 3-phosphate and pyruvate: step 1/1. Functionally, catalyzes the acyloin condensation reaction between C atoms 2 and 3 of pyruvate and glyceraldehyde 3-phosphate to yield 1-deoxy-D-xylulose-5-phosphate (DXP). This is 1-deoxy-D-xylulose-5-phosphate synthase from Prochlorococcus marinus (strain MIT 9515).